The following is a 1697-amino-acid chain: Neurexin-3a (1697 aa).

The N-terminal stretch at 1 to 23 (MNFFRFPVQLQLLISTVLGPCLG) is a signal peptide. The Laminin G-like 1 domain occupies 24-198 (LEFTGLQGQW…RVRMDIEGIC (175 aa)). Residues 24-1622 (LEFTGLQGQW…EVVRESSSTT (1599 aa)) lie on the Extracellular side of the membrane. The 38-residue stretch at 194–231 (IEGICMENPCENGGTCSVVDGEPLCDCSKTEYVGRFCN) folds into the EGF-like 1 domain. 3 disulfides stabilise this stretch: Cys-198–Cys-209, Cys-203–Cys-218, and Cys-220–Cys-230. 2 Laminin G-like domains span residues 258–455 (VATF…VFKC) and 462–654 (DPIS…KPSC). Residues Asp-304, Leu-321, and Met-389 each coordinate Ca(2+). 5 disulfides stabilise this stretch: Cys-419-Cys-455, Cys-625-Cys-654, Cys-662-Cys-673, Cys-667-Cys-682, and Cys-684-Cys-694. The EGF-like 2 domain maps to 658–695 (SGKQCDSYPCKNKGLCKEGWNRFICDCTGTGYWSRTCE). 2 consecutive Laminin G-like domains span residues 700 to 872 (ILSY…IDFC) and 886 to 1061 (DPVT…ERGC). Intrachain disulfides connect Cys-1033–Cys-1061, Cys-1077–Cys-1088, Cys-1082–Cys-1097, and Cys-1099–Cys-1109. The EGF-like 3 domain maps to 1073-1110 (PSTTCQEDSCANMGICIQQWENYTCDCSMTSYTGTHCN). Residues 1114–1314 (TTYIFGKGGG…NPNIKINGSV (201 aa)) form the Laminin G-like 6 domain. Disordered stretches follow at residues 1345–1366 (TMSTTTTRKHRTPPTIQTTDDM), 1442–1479 (LSDGGSDDCGDDDDDDDDDGLMISGYGSGEAYDSNLPP), and 1520–1557 (PNKVFDSGRTTTASFSPKLSRSTTTSTPPKLPAGKMNH). Acidic residues predominate over residues 1446–1461 (GSDDCGDDDDDDDDDG). Residues 1527-1547 (GRTTTASFSPKLSRSTTTSTP) are compositionally biased toward polar residues. Residues 1623–1643 (GMVVGIVAAAALCILILLYAM) form a helical membrane-spanning segment. Residues 1644–1697 (YKYRNRDEGSYQVDETRNYITNSAQSNGAVMKDKQQSTKSGNKKQKNKDKEYYV) are Cytoplasmic-facing. The tract at residues 1665-1697 (NSAQSNGAVMKDKQQSTKSGNKKQKNKDKEYYV) is disordered.

Belongs to the neurexin family.

It is found in the membrane. Neuronal cell surface protein that may be involved in cell recognition and cell adhesion. The chain is Neurexin-3a (nrxn3a) from Danio rerio (Zebrafish).